We begin with the raw amino-acid sequence, 24 residues long: Brevinin-1SY (24 aa).

Cysteine 18 and cysteine 24 are oxidised to a cystine.

Expressed by the skin glands.

It localises to the secreted. Functionally, antibacterial activity against Gram-positive bacterium S.aureus and Gram-negative bacterium E.coli. The polypeptide is Brevinin-1SY (Lithobates sylvaticus (Wood frog)).